A 229-amino-acid chain; its full sequence is Uracil-DNA glycosylase (229 aa).

D64 (proton acceptor) is an active-site residue.

The protein belongs to the uracil-DNA glycosylase (UDG) superfamily. UNG family.

The protein resides in the cytoplasm. The catalysed reaction is Hydrolyzes single-stranded DNA or mismatched double-stranded DNA and polynucleotides, releasing free uracil.. In terms of biological role, excises uracil residues from the DNA which can arise as a result of misincorporation of dUMP residues by DNA polymerase or due to deamination of cytosine. This Geobacillus thermodenitrificans (strain NG80-2) protein is Uracil-DNA glycosylase.